The chain runs to 1263 residues: Multidrug resistance protein sirA (1263 aa).

Residues 1–21 (MAEPESEKPSSAQGGGLPSSD) are disordered. Transmembrane regions (helical) follow at residues 57 to 77 (LISA…ILFI), 104 to 124 (IALY…IFTN), 179 to 199 (KIGL…IGFV), and 206 to 226 (FILT…SGFM). The region spanning 57–347 (LISAFFAAVS…VGPHLQAMSL (291 aa)) is the ABC transmembrane type-1 1 domain. Residue asparagine 232 is glycosylated (N-linked (GlcNAc...) asparagine). The next 2 helical transmembrane spans lie at 284–304 (VMGW…GLAI) and 318–338 (VGAI…FGNV). The 246-residue stretch at 380 to 625 (IEFRNVSHVY…EGLYQTFVRR (246 aa)) folds into the ABC transporter 1 domain. N-linked (GlcNAc...) asparagine glycosylation occurs at asparagine 384. An ATP-binding site is contributed by 415-422 (GASGSGKS). The N-linked (GlcNAc...) asparagine glycan is linked to asparagine 469. The tract at residues 635–672 (PPHARITPAVDTPASPQHRLSEKTGSIYGQGESEAADK) is disordered. The next 6 membrane-spanning stretches (helical) occupy residues 699-719 (VTGI…SVFF), 740-760 (FWAA…GVQG), 817-839 (VFLG…SLAV), 843-865 (LTLV…LKLV), 930-950 (LSEA…ATLV), and 960-980 (FFIV…VFAF). In terms of domain architecture, ABC transmembrane type-1 2 spans 699–986 (VTGIASAVIS…VFAFAPDFGK (288 aa)). One can recognise an ABC transporter 2 domain in the interval 1021–1259 (VDVSNVVFYY…RGSYYDSVNL (239 aa)). 1056–1063 (GGSGSGKS) contributes to the ATP binding site.

Belongs to the ABC transporter superfamily. ABCB family. Multidrug resistance exporter (TC 3.A.1.201) subfamily.

The protein resides in the cell membrane. The catalysed reaction is ATP + H2O + xenobioticSide 1 = ADP + phosphate + xenobioticSide 2.. In terms of biological role, sirodesmin transporter that provides the dual role of sirodesmin export and self-protection. Also provides tolerance to gliotoxin. The protein is Multidrug resistance protein sirA of Leptosphaeria maculans (Blackleg fungus).